Here is a 233-residue protein sequence, read N- to C-terminus: Merozoite surface protein 1 (233 aa).

The N-terminal stretch at 1 to 19 (MKIIFFLCSFLFFIINTQC) is a signal peptide. Positions 58-67 (SGTAVTTSTP) are enriched in polar residues. A disordered region spans residues 58–110 (SGTAVTTSTPGSKGSVASGGSGGSVASGGSVASGGSGNSRRTNPSDNSSDSDA). Over residues 74 to 94 (ASGGSGGSVASGGSVASGGSG) the composition is skewed to gly residues. Residues 95-107 (NSRRTNPSDNSSD) show a composition bias toward polar residues. Asparagine 104 carries an N-linked (GlcNAc...) asparagine glycan.

As to quaternary structure, forms a complex composed of subunits p83, p30, p38, and p42 which remain non-covalently associated; the complex is formed at the merozoite surface prior to egress from host erythrocytes. Forms a complex composed of processed MSP1 subunits, MSP6 subunit p36 and MSP7; the complex is formed at the merozoite surface prior to egress from host erythrocytes. Within the complex, interacts (via subunit p38) with MSP6 subunit p36 and (via subunits p83, p30 and p38) with MSP7 (via subunit p22). Forms a complex composed of MSP1, MSP6, DBLMSP1 and DBLMSP2. Within the complex, interacts (via subunit p38) with DBLMSP1 and DBLMSP2. Forms a complex composed of MSP1, and rhoptry proteins RhopH3, RAP1 and CLAG9/RhopH3. Within the complex, interacts (via subunits p42 and p19) with RhopH3 (via C-terminus). Forms a complex composed of MSP1, MSP6, MSP7, MSP9 and MSP3; within the complex, MSP6 and MSP9 mediate the binding to the host erythrocyte. Interacts (via subunits p19 and p42) with MSP9; the interaction is direct; MSP1 subunits p19 or p42, and MSP9 form a co-ligand complex that interacts with host SLC4A1/Band 3 protein. May interact with PFD6. Interacts with host spectrin. In terms of processing, the p190 precursor is cleaved by SUB1 prior to merozoite egress into 4 subunits p83, p30, p38, and p42 which remain non-covalently associated. SUB1-mediated proteolytic cleavage occurs in an orderly manner; the first cleavage occurs at the p83/p30 site, followed by cleavage at the p30/p38 site, the last cleavage occurs at the p38/p42 site. The order of cleavage is essential for parasite viability. SUB1-mediated processing is essential for merozoite egress. In a second processing step during erythrocyte invasion, p42 is cleaved by SUB2 into p33 and p19; the latter remains attached to the merozoite surface via its GPI-anchor and stays on the surface during the subsequent ring stage.

The protein resides in the cell membrane. It is found in the secreted. Its function is as follows. During the asexual blood stage, involved in merozoite egress from host erythrocytes possibly via its interaction with the host cytoskeleton protein spectrin resulting in the destabilization of the host cytoskeleton and thus leading to erythrocyte cell membrane rupture. Involved in the binding to host erythrocytes and is required for host erythrocyte invasion. The polypeptide is Merozoite surface protein 1 (Plasmodium falciparum (isolate CDC / Honduras)).